A 262-amino-acid chain; its full sequence is Flap endonuclease Xni (262 aa).

Position 105 (Asp105) interacts with Mg(2+). The region spanning Glu162–Lys257 is the 5'-3' exonuclease domain. Positions 172, 173, 181, 183, and 186 each coordinate K(+). The tract at residues Gly185–Ser190 is interaction with DNA.

This sequence belongs to the Xni family. It depends on Mg(2+) as a cofactor. K(+) is required as a cofactor.

In terms of biological role, has flap endonuclease activity. During DNA replication, flap endonucleases cleave the 5'-overhanging flap structure that is generated by displacement synthesis when DNA polymerase encounters the 5'-end of a downstream Okazaki fragment. This chain is Flap endonuclease Xni, found in Shewanella baltica (strain OS223).